Here is a 73-residue protein sequence, read N- to C-terminus: Disintegrin cerastin (73 aa).

The region spanning 1-73 is the Disintegrin domain; that stretch reads EAGEECDCGT…ADCPRNGLYG (73 aa). 6 cysteine pairs are disulfide-bonded: Cys-6/Cys-21, Cys-8/Cys-16, Cys-15/Cys-38, Cys-29/Cys-35, Cys-34/Cys-59, and Cys-47/Cys-66. The Cell attachment site signature appears at 51–53; it reads RGD.

Belongs to the venom metalloproteinase (M12B) family. P-II subfamily. P-IIa sub-subfamily. In terms of assembly, monomer (disintegrin). Expressed by the venom gland.

The protein resides in the secreted. Its function is as follows. Inhibits fibrinogen interaction with platelets. Acts by binding to alpha-IIb/beta-3 (ITGA2B/ITGB3) on the platelet surface and inhibits aggregation induced by ADP, thrombin, platelet-activating factor and collagen. The sequence is that of Disintegrin cerastin from Crotalus cerastes cerastes (Mojave desert sidewinder).